Consider the following 130-residue polypeptide: uncharacterized protein (130 aa).

The tract at residues 1–104 (MRPGSSPRAP…RGRWGLRGGP (104 aa)) is disordered. A compositionally biased stretch (low complexity) spans 88 to 97 (RRQPGPQRGR).

This is an uncharacterized protein from Homo sapiens (Human).